Here is a 167-residue protein sequence, read N- to C-terminus: MPEQIDGNKLDLEERVVTINRVAKVVKGGRRFRFTALVVVGDKNGHVGFGTGKAQEVPDAIRKAVEDAKKNMVLVPTVDTTIPHTVVGHFGGGEILLKPASAGSGVTAGGPVRAVLELAGVADVSSKSLGSNTPINMVRATIDGIKQLKNAEDVAKLRGKTVEELLG.

The S5 DRBM domain maps to 12 to 75; it reads LEERVVTINR…EDAKKNMVLV (64 aa).

The protein belongs to the universal ribosomal protein uS5 family. In terms of assembly, part of the 30S ribosomal subunit. Contacts proteins S4 and S8.

With S4 and S12 plays an important role in translational accuracy. Functionally, located at the back of the 30S subunit body where it stabilizes the conformation of the head with respect to the body. In Listeria monocytogenes serotype 4b (strain F2365), this protein is Small ribosomal subunit protein uS5.